Consider the following 217-residue polypeptide: NADPH-dependent 3-demethoxyubiquinone 3-hydroxylase, mitochondrial (217 aa).

The N-terminal 34 residues, 1–34 (MSCARALAACCLWRLRTGALQPLSAYGRRISVRF), are a transit peptide targeting the mitochondrion. A run of 2 repeats spans residues 48 to 129 (AVDR…TALL) and 130 to 217 (GKEG…SERL). Positions 48–217 (AVDRIIRVDH…KVAIYLSERL (170 aa)) are 2 X approximate tandem repeats. Residue R51 participates in NADH binding. Positions 60, 90, 93, 142, 178, and 181 each coordinate Fe cation. Residues K208, Y212, and R216 each contribute to the NADH site.

The protein belongs to the COQ7 family. As to quaternary structure, component of a multi-subunit COQ enzyme complex. Interacts with COQ8B and COQ6. Interacts with COQ9. Requires Fe cation as cofactor.

It localises to the mitochondrion inner membrane. The enzyme catalyses a 5-methoxy-2-methyl-3-(all-trans-polyprenyl)benzoquinone + NADH + O2 = a 3-demethylubiquinone + NAD(+) + H2O. It participates in cofactor biosynthesis; ubiquinone biosynthesis. Catalyzes the hydroxylation of the 5-methoxy-2-methyl-3-(all-trans-polyprenyl)benzoquinone at the C6 position and participates in the biosynthesis of ubiquinone. Catalyzes the reaction through a substrate-mediated reduction pathway, whereby NADH shuttles electrons to 5-methoxy-2-methyl-3-(all-trans-decaprenyl)benzoquinone, which then transfers the electrons to the two Fe(3+) centers. The binding of 5-methoxy-2-methyl-3-(all-trans-polyprenyl)benzoquinone (DMQn) mediates reduction of the diiron center by nicotinamide adenine dinucleotide (NADH) and initiates oxygen activation for subsequent DMQ hydroxylation. The physiological substrates are 5-methoxy-2-methyl-3-(all-trans-nonaprenyl)benzoquinone (DMQ(9)) and 5-methoxy-2-methyl-3-(all-trans-decaprenyl)benzoquinone (DMQ(10)), however in vitro the enzyme does not have any specificity concerning the length of the polyprenyl tail, and accepts tails of various lengths with similar efficiency. Also has a structural role in the COQ enzyme complex, stabilizing other COQ polypeptides. Involved in lifespan determination in a ubiquinone-independent manner. Plays a role in modulating mitochondrial stress responses, acting in the nucleus, perhaps via regulating gene expression, independent of its characterized mitochondrial function in ubiquinone biosynthesis. This is NADPH-dependent 3-demethoxyubiquinone 3-hydroxylase, mitochondrial from Bos taurus (Bovine).